The chain runs to 666 residues: DNA mismatch repair protein MutL (666 aa).

This sequence belongs to the DNA mismatch repair MutL/HexB family.

Functionally, this protein is involved in the repair of mismatches in DNA. It is required for dam-dependent methyl-directed DNA mismatch repair. May act as a 'molecular matchmaker', a protein that promotes the formation of a stable complex between two or more DNA-binding proteins in an ATP-dependent manner without itself being part of a final effector complex. The sequence is that of DNA mismatch repair protein MutL from Clostridium botulinum (strain Kyoto / Type A2).